A 300-amino-acid chain; its full sequence is Protoheme IX farnesyltransferase (300 aa).

The next 8 membrane-spanning stretches (helical) occupy residues 24–44, 46–66, 94–114, 118–138, 146–166, 172–192, 224–244, and 278–298; these read VTQL…PGMV, WHVL…AFAI, PQIL…LYTF, LTMW…TLLL, IVIG…AVTG, AWIL…VLAL, VILF…VVYL, and IVYL…RPLL.

It belongs to the UbiA prenyltransferase family. Protoheme IX farnesyltransferase subfamily.

The protein localises to the cell inner membrane. The catalysed reaction is heme b + (2E,6E)-farnesyl diphosphate + H2O = Fe(II)-heme o + diphosphate. The protein operates within porphyrin-containing compound metabolism; heme O biosynthesis; heme O from protoheme: step 1/1. In terms of biological role, converts heme B (protoheme IX) to heme O by substitution of the vinyl group on carbon 2 of heme B porphyrin ring with a hydroxyethyl farnesyl side group. This chain is Protoheme IX farnesyltransferase, found in Burkholderia ambifaria (strain ATCC BAA-244 / DSM 16087 / CCUG 44356 / LMG 19182 / AMMD) (Burkholderia cepacia (strain AMMD)).